Reading from the N-terminus, the 407-residue chain is Fructose-1,6-bisphosphatase, chloroplastic (407 aa).

The N-terminal 50 residues, 1 to 50 (MAAATASSQLIFSKPYSPSRLCPFQLCVFDAKSVLSSSRRKHVNGSGVRC), are a transit peptide targeting the chloroplast. Mg(2+)-binding residues include glutamate 126, glutamate 155, aspartate 176, leucine 178, and aspartate 179. Position 179–182 (179–182 (DGSS)) interacts with substrate. Cysteine 203 and cysteine 223 are disulfide-bonded. 5 residues coordinate substrate: asparagine 287, tyrosine 319, tyrosine 337, tyrosine 339, and lysine 349. Glutamate 355 lines the Mg(2+) pocket.

This sequence belongs to the FBPase class 1 family. In terms of assembly, homotetramer. Mg(2+) is required as a cofactor.

It is found in the plastid. It localises to the chloroplast stroma. The enzyme catalyses beta-D-fructose 1,6-bisphosphate + H2O = beta-D-fructose 6-phosphate + phosphate. The protein operates within carbohydrate biosynthesis; Calvin cycle. In Pisum sativum (Garden pea), this protein is Fructose-1,6-bisphosphatase, chloroplastic (FBP).